Consider the following 351-residue polypeptide: Dihydroorotate dehydrogenase (quinone) (351 aa).

Residues 61 to 65 and T85 each bind FMN; that span reads AGLDK. K65 serves as a coordination point for substrate. A substrate-binding site is contributed by 110-114; that stretch reads NRMGF. FMN is bound by residues N139 and N172. N172 contacts substrate. The active-site Nucleophile is S175. Substrate is bound at residue N177. FMN contacts are provided by K217 and T245. Residue 246–247 participates in substrate binding; that stretch reads NT. FMN-binding positions include G268, G297, and 318-319; that span reads YS.

It belongs to the dihydroorotate dehydrogenase family. Type 2 subfamily. Monomer. FMN serves as cofactor.

It is found in the cell membrane. The enzyme catalyses (S)-dihydroorotate + a quinone = orotate + a quinol. It functions in the pathway pyrimidine metabolism; UMP biosynthesis via de novo pathway; orotate from (S)-dihydroorotate (quinone route): step 1/1. In terms of biological role, catalyzes the conversion of dihydroorotate to orotate with quinone as electron acceptor. This chain is Dihydroorotate dehydrogenase (quinone), found in Stenotrophomonas maltophilia (strain R551-3).